The following is a 651-amino-acid chain: Acetyl-coenzyme A synthetase (651 aa).

Residues 189–192 (RGGK), Thr-311, and Asn-335 each bind CoA. ATP is bound by residues 387-389 (GEP), 411-416 (DTWWQT), Asp-500, and Arg-515. Ser-523 is a binding site for CoA. Arg-526 lines the ATP pocket. Val-537, His-539, and Val-542 together coordinate Mg(2+). Position 584 (Arg-584) interacts with CoA. Residue Lys-609 is modified to N6-acetyllysine.

It belongs to the ATP-dependent AMP-binding enzyme family. Mg(2+) is required as a cofactor. Post-translationally, acetylated. Deacetylation by the SIR2-homolog deacetylase activates the enzyme.

The enzyme catalyses acetate + ATP + CoA = acetyl-CoA + AMP + diphosphate. In terms of biological role, catalyzes the conversion of acetate into acetyl-CoA (AcCoA), an essential intermediate at the junction of anabolic and catabolic pathways. AcsA undergoes a two-step reaction. In the first half reaction, AcsA combines acetate with ATP to form acetyl-adenylate (AcAMP) intermediate. In the second half reaction, it can then transfer the acetyl group from AcAMP to the sulfhydryl group of CoA, forming the product AcCoA. This is Acetyl-coenzyme A synthetase from Agrobacterium fabrum (strain C58 / ATCC 33970) (Agrobacterium tumefaciens (strain C58)).